An 818-amino-acid chain; its full sequence is Serine/threonine-protein kinase PTK2/STK2 (818 aa).

Residues 28–39 (NSSSHTDNSSLL) are compositionally biased toward polar residues. 2 disordered regions span residues 28-100 (NSSS…GSVS) and 117-177 (NPYL…SHHF). At threonine 56 the chain carries Phosphothreonine. The span at 57–81 (SPSISGSGSGGNSPSSSAGARQRSA) shows a compositional bias: low complexity. Phosphoserine occurs at positions 59 and 80. Residues 136-160 (TRDRDRAVLDREKEKERARNKERNT) show a composition bias toward basic and acidic residues. A Protein kinase domain is found at 255–562 (DTDNKPIGSG…MDDLFNDPFF (308 aa)). ATP contacts are provided by residues 261–269 (IGSGGSSEV) and lysine 285. Aspartate 388 (proton acceptor) is an active-site residue. Positions 585–595 (STSTNDFSENS) are enriched in polar residues. Residues 585–795 (STSTNDFSEN…SVSSSKKKKV (211 aa)) form a disordered region. 2 positions are modified to phosphoserine: serine 623 and serine 632. 2 stretches are compositionally biased toward basic and acidic residues: residues 638–651 (KVKD…HDVG) and 659–685 (TKPK…KVIE). Serine 694 is subject to Phosphoserine. Phosphothreonine is present on threonine 700. Serine 711 is subject to Phosphoserine. Over residues 727-736 (TPTTPTHNGP) the composition is skewed to low complexity. Threonine 737 is subject to Phosphothreonine. 4 positions are modified to phosphoserine: serine 752, serine 755, serine 778, and serine 781. The segment covering 755 to 767 (SLKSETPASTKNF) has biased composition (polar residues). The segment covering 768-789 (SAPNVSSSSNSLRSLGSPSVSS) has biased composition (low complexity).

The protein belongs to the protein kinase superfamily. Ser/Thr protein kinase family.

The protein localises to the nucleus. It is found in the cytoplasm. The enzyme catalyses L-seryl-[protein] + ATP = O-phospho-L-seryl-[protein] + ADP + H(+). The catalysed reaction is L-threonyl-[protein] + ATP = O-phospho-L-threonyl-[protein] + ADP + H(+). Essential determinant for high-affinity spermidine transport. Required for the activation of the plasma membrane proton pump PMA1 via phosphorylation of 'Ser-899'. This is Serine/threonine-protein kinase PTK2/STK2 (PTK2) from Saccharomyces cerevisiae (strain ATCC 204508 / S288c) (Baker's yeast).